We begin with the raw amino-acid sequence, 214 residues long: Putative AgrB-like protein 2 (214 aa).

5 helical membrane-spanning segments follow: residues I41 to L61, T83 to A103, L109 to A129, I154 to W174, and P179 to G199.

The protein belongs to the AgrB family.

It localises to the cell membrane. Functionally, may be involved in the proteolytic processing of a quorum sensing system signal molecule precursor. This is Putative AgrB-like protein 2 from Clostridium perfringens (strain 13 / Type A).